The following is a 351-amino-acid chain: Renin receptor (351 aa).

The signal sequence occupies residues 1–17 (MAVLVVFLSFLVADVFG). Over 18–303 (NEFSILRSPG…YNLAYKYNFE (286 aa)) the chain is Extracellular. Residues 304-324 (YPVVFNLVLWIMIGLALTLIV) form a helical membrane-spanning segment. Residues 325–351 (TCYNIWNMDPGYDSIIYRMTNQKIRMD) are Cytoplasmic-facing. The Mediates retrograde transport to the ER motif lies at 347 to 351 (KIRMD).

Interacts with renin. Accessory component of the multisubunit proton-transporting vacuolar (V)-ATPase protein pump. Interacts (via N-terminus) with ATP6AP1 (via N-terminus). Interacts with ATP6V0D1; ATP6V0D1 is a V-ATPase complex subunit and the interaction promotes V-ATPase complex assembly. Interacts with TMEM9; TMEM9 is a V-ATPase assembly regulator and the interaction induces the interaction with ATP6V0D1. Interacts with VMA21 (via N-terminus); VMA21 is a V-ATPase accessory component. Post-translationally, phosphorylated. Proteolytically cleaved by a furin-like convertase in the trans-Golgi network to generate N- and C-terminal fragments. Expressed in the brain.

Its subcellular location is the endoplasmic reticulum membrane. The protein localises to the lysosome membrane. It is found in the cytoplasmic vesicle. The protein resides in the autophagosome membrane. It localises to the cell projection. Its subcellular location is the dendritic spine membrane. The protein localises to the axon. It is found in the endosome membrane. The protein resides in the clathrin-coated vesicle membrane. It localises to the secretory vesicle. Its subcellular location is the synaptic vesicle membrane. In terms of biological role, multifunctional protein which functions as a renin, prorenin cellular receptor and is involved in the assembly of the lysosomal proton-transporting V-type ATPase (V-ATPase) and the acidification of the endo-lysosomal system. May mediate renin-dependent cellular responses by activating ERK1 and ERK2. By increasing the catalytic efficiency of renin in AGT/angiotensinogen conversion to angiotensin I, may also play a role in the renin-angiotensin system (RAS). Through its function in V-type ATPase (v-ATPase) assembly and acidification of the lysosome it regulates protein degradation and may control different signaling pathways important for proper brain development, synapse morphology and synaptic transmission. The sequence is that of Renin receptor (ATP6AP2) from Bos taurus (Bovine).